The sequence spans 178 residues: Transcription termination/antitermination protein NusG (178 aa).

Residues 130 to 159 (SVKVKEGPFANFIGTIEEIQLDKRKLKVHV) form the KOW domain.

It belongs to the NusG family.

In terms of biological role, participates in transcription elongation, termination and antitermination. The protein is Transcription termination/antitermination protein NusG of Halalkalibacterium halodurans (strain ATCC BAA-125 / DSM 18197 / FERM 7344 / JCM 9153 / C-125) (Bacillus halodurans).